Consider the following 94-residue polypeptide: Venom peptide SjAPI (94 aa).

An N-terminal signal peptide occupies residues M1–G24. Positions W25 to W30 are excised as a propeptide. Intrachain disulfides connect C33–C70, C43–C66, C47–C62, C51–C92, and C72–C86. The region spanning C33–C92 is the TIL domain. The protease binding loop stretch occupies residues A63–V65.

This sequence belongs to the serine protease inhibitor-like (TIL domain-containing) family. Expressed by the venom gland.

It localises to the secreted. Its function is as follows. Recombinant protein inhibits both alpha-chymotrypsin (Ki=97.1 nM) and elastase (Ki=3700 nM). The chain is Venom peptide SjAPI from Scorpiops jendeki (Scorpion).